Reading from the N-terminus, the 221-residue chain is Urease accessory protein UreF (221 aa).

It belongs to the UreF family. In terms of assembly, ureD, UreF and UreG form a complex that acts as a GTP-hydrolysis-dependent molecular chaperone, activating the urease apoprotein by helping to assemble the nickel containing metallocenter of UreC. The UreE protein probably delivers the nickel.

Its subcellular location is the cytoplasm. Required for maturation of urease via the functional incorporation of the urease nickel metallocenter. This chain is Urease accessory protein UreF, found in Aliivibrio fischeri (strain ATCC 700601 / ES114) (Vibrio fischeri).